We begin with the raw amino-acid sequence, 79 residues long: Defensin-like protein 117 (79 aa).

Positions 1–24 are cleaved as a signal peptide; sequence MTTTKTMLVAFVLTLFFVISSVHC. 4 cysteine pairs are disulfide-bonded: Cys40-Cys75, Cys46-Cys68, Cys53-Cys73, and Cys57-Cys74.

This sequence belongs to the DEFL family.

The protein localises to the secreted. In Arabidopsis thaliana (Mouse-ear cress), this protein is Defensin-like protein 117.